Here is a 485-residue protein sequence, read N- to C-terminus: Sulfate adenylyltransferase subunit 1 (485 aa).

In terms of domain architecture, tr-type G spans 30–243 (KGLLRFLTCG…ELLETIDTQR (214 aa)). Residues 39-46 (GSVDDGKS) are G1. 39–46 (GSVDDGKS) provides a ligand contact to GTP. Positions 97-101 (GITID) are G2. The tract at residues 118 to 121 (DTPG) is G3. GTP-binding positions include 118–122 (DTPGH) and 173–176 (NKMD). Positions 173-176 (NKMD) are G4. The tract at residues 210–212 (SAL) is G5.

Belongs to the TRAFAC class translation factor GTPase superfamily. Classic translation factor GTPase family. CysN/NodQ subfamily. As to quaternary structure, heterodimer composed of CysD, the smaller subunit, and CysN.

The enzyme catalyses sulfate + ATP + H(+) = adenosine 5'-phosphosulfate + diphosphate. It functions in the pathway sulfur metabolism; hydrogen sulfide biosynthesis; sulfite from sulfate: step 1/3. Functionally, with CysD forms the ATP sulfurylase (ATPS) that catalyzes the adenylation of sulfate producing adenosine 5'-phosphosulfate (APS) and diphosphate, the first enzymatic step in sulfur assimilation pathway. APS synthesis involves the formation of a high-energy phosphoric-sulfuric acid anhydride bond driven by GTP hydrolysis by CysN coupled to ATP hydrolysis by CysD. This Shewanella oneidensis (strain ATCC 700550 / JCM 31522 / CIP 106686 / LMG 19005 / NCIMB 14063 / MR-1) protein is Sulfate adenylyltransferase subunit 1.